A 142-amino-acid chain; its full sequence is Fusaric acid resistance protein FusB (142 aa).

A disordered region spans residues 73–142; it reads AAPCSRKAST…ASCSPAIRPR (70 aa). A compositionally biased stretch (low complexity) spans 81–142; the sequence is STGSPARSSG…ASCSPAIRPR (62 aa).

Involved in the resistance (detoxification) of the fungal toxin fusaric acid. The sequence is that of Fusaric acid resistance protein FusB (fusB) from Burkholderia cepacia (Pseudomonas cepacia).